We begin with the raw amino-acid sequence, 451 residues long: METNQILETIRMIEEEKLDIRTITMGISLLDCMDGDGEVARKKIYQKIVTKARNLVAVGEAIESEFGIPIINKRISVTPIAIIAGSSADTDYVEFAKTLDAAAKEVGVNFIGGYSALVQKGYTKGDEILIRSIPQALAQTERVCSSVNVGSTRTGINMDAVRQMGEVIKETADLTADTQGLGCAKLVVFANAVEDNPFMAGAFHGVGEADCVINVGVSGPGVVKRAIEKVKGEPFDIVAETVKQTAFKITRMGQLVGQVASEKLGVPFGIVDLSLAPTPAIGDSVAHILEEMGLEMVGTHGTTAALALLNDAVKKGGVMACGHVGGLSGAFIPVSEDAGMIEAVQQGALNLEKLEAMTAICSVGLDMIAVPGDTTAETLAAMIADEAAIGVINNKTTAVRVIPASGTKVGDMVEFGGLLGTAPVMPVNGKSSASFIARGGRIPAPIHSFKN.

It belongs to the UPF0210 family. Homodimer.

This Listeria innocua serovar 6a (strain ATCC BAA-680 / CLIP 11262) protein is UPF0210 protein lin0538.